The chain runs to 433 residues: Serine--tRNA ligase (433 aa).

235–237 (TSE) lines the L-serine pocket. 266–268 (RSE) is a binding site for ATP. E289 provides a ligand contact to L-serine. An ATP-binding site is contributed by 353–356 (EISS). S388 contacts L-serine.

It belongs to the class-II aminoacyl-tRNA synthetase family. Type-1 seryl-tRNA synthetase subfamily. Homodimer. The tRNA molecule binds across the dimer.

Its subcellular location is the cytoplasm. It catalyses the reaction tRNA(Ser) + L-serine + ATP = L-seryl-tRNA(Ser) + AMP + diphosphate + H(+). It carries out the reaction tRNA(Sec) + L-serine + ATP = L-seryl-tRNA(Sec) + AMP + diphosphate + H(+). It participates in aminoacyl-tRNA biosynthesis; selenocysteinyl-tRNA(Sec) biosynthesis; L-seryl-tRNA(Sec) from L-serine and tRNA(Sec): step 1/1. Functionally, catalyzes the attachment of serine to tRNA(Ser). Is also able to aminoacylate tRNA(Sec) with serine, to form the misacylated tRNA L-seryl-tRNA(Sec), which will be further converted into selenocysteinyl-tRNA(Sec). In Burkholderia cenocepacia (strain ATCC BAA-245 / DSM 16553 / LMG 16656 / NCTC 13227 / J2315 / CF5610) (Burkholderia cepacia (strain J2315)), this protein is Serine--tRNA ligase.